The primary structure comprises 181 residues: ECF RNA polymerase sigma factor RpoE (181 aa).

Residues 29–96 are sigma-70 factor domain-2; that stretch reads LFQHFAPKVK…RRIDGLRKDR (68 aa). The short motif at 53–56 is the Interaction with polymerase core subunit RpoC element; it reads ECAQ. The segment at 129–178 is sigma-70 factor domain-4; the sequence is AIARLPEAQRALIERAFFGDLTHRELAAETGLPLGTIKSRIRLALDRLRQ. The segment at residues 151 to 170 is a DNA-binding region (H-T-H motif); it reads HRELAAETGLPLGTIKSRIR.

Belongs to the sigma-70 factor family. ECF subfamily. Interacts transiently with the RNA polymerase catalytic core formed by RpoA, RpoB, RpoC and RpoZ (2 alpha, 1 beta, 1 beta' and 1 omega subunit) to form the RNA polymerase holoenzyme that can initiate transcription. Forms a 1:1 complex (via sigma-70 factor domain 4) with anti-sigma factor ChrR; this inhibits the interaction of RpoE with the RNA polymerase catalytic core.

Its function is as follows. Sigma factors are initiation factors that promote the attachment of RNA polymerase to specific initiation sites and are then released. Extracytoplasmic function (ECF) sigma factors are held in an inactive form by a cognate anti-sigma factor until released. Sigma-E controls a transcriptional response to singlet oxygen, a by-product of photosynthesis; its continuous activity requires constant exposure to singlet oxygen. The regulon has about 180 genes that protect against or repair damage induced by singlet oxygen, including itself and rpoH2, a heat shock-responsive sigma factor. This Cereibacter sphaeroides (strain ATCC 17023 / DSM 158 / JCM 6121 / CCUG 31486 / LMG 2827 / NBRC 12203 / NCIMB 8253 / ATH 2.4.1.) (Rhodobacter sphaeroides) protein is ECF RNA polymerase sigma factor RpoE (rpoE).